A 1679-amino-acid polypeptide reads, in one-letter code: MSNTTRSSRVTIGRIGTTPQITDPWSSGLEKQRPSRCGGPKSLAEPTYRKIGRRKMMLHMRVHDPGTTVTQRAKETATAKLNRIYLCTFNRMAQSCIYFVLFLVILSPNTSCALRSSAGETQNYVGILSNDSATTTYDVSSLHSSRRTNPPSSSSSSSSNVDVDYRNDRELHKVDLVGLGGERAGQAETISGGKYDYNYENTHTNASAKDEIVERQSNSLDFDGVDMFGAFSIPEEAIYTNEFAVNIPAGKQMADVIATKHGFINRGQIGSLDNYYLFQHHHVSKRSLRSSRKHQGALKSENEVKWMQQQHEKVRRKRDGPYQDLPTYSPYNLLRQHGGYVVDPNPHLSFSPESISLASHSQRMEYRDVSSHFIFPDPLFKEQWYLNGGAKDGLDMNVGPAWQKGYTGKGVVVSILDDGIQTNHPDLAQNYDPEASFDINGNDSDPTPQDNGDNKHGTRCAGEVAAVAFNNFCGVGVAYNASIGGVRMLDGKVNDVVEAQALSLNPSHIDIYSASWGPEDDGSTVDGPGPLARRAFIYGVTSGRQGKGSIFVWASGNGGRYTDSCNCDGYTNSIFTLSISSATQAGFKPWYLEECSSTLATTYSSGTPGHDKSVATVDMDGSLRPDHICTVEHTGTSASAPLAAGICALALEANPELTWRDMQYLVVYTSRPAPLEKENGWTLNGVKRKYSHKFGYGLMDAGAMVSLAEQWTSVPPQHICKSRENNEDRKIDGAYGSTLSTHMDVNGCAGTINEVRYLEHVQCRITLRFFPRGNLRILLTSPMGTTSTLLFERPRDIVKSNFDDWPFLSVHFWGEKAEGRWTLQVINGGRRRVNQPGILSKWQLIFYGTSTQPMRLKSELLNSSPQLRSPSSSNPFLFPSASNIGQPANEGGNFNTDSFASYLNYQNIFSSAGSDPEPATATLDGQNVTAAIAGGSSAESLGFTASAAQLVAAPETRDGDKKILHSCDAECDSSGCYGRGPTQCVACSHYRLDNTCVSRCPPRSFPNQVGICWPCHDTCETCAGAGPDSCLTCAPAHLHVIDLAVCLQFCPDGYFENSRNRTCVPCEPNCASCQDHPEYCTSCDHHLVMHEHKCYSACPLDTYETEDNKCAFCHSTCATCNGPTDQDCITCRSSRYAWQNKCLISCPDGFYADKKRLECMPCQEGCKTCTSNGVCSECLQNWTLNKRDKCIVSGSEGCSESEFYSQVEGQCRPCHASCGSCNGPADTSCTSCPPNRLLEQSRCVSGCREGFFVEAGSLCSPCLHTCSQCVSRTNCSNCSKGLELQNGECRTTCADGYYSDRGICAKCYLSCHTCSGPRRNQCVQCPAGWQLAAGECHPECPEGFYKSDFGCQKCHHYCKTCNDAGPLACTSCPPHSMLDGGLCMECLSSQYYDTTSATCKTCHDSCRSCFGPGQFSCKGCVPPLHLDQLNSQCVSCCQNQTLAEKTSSAACCNCDGETGECKATSTGGKRRTVVGSGSAYKSSESKHGSFENDGNAREFVLRLDSPLTAITAIAVAICLLIITIFSIIFAVLQRNSNHVSRNSVRYRKIANTSSGRRKNLSAKPTSDARFIFNIGEDDDTDGDNSDDELDGNVGTDINNRIVYDRKGNDHGHEFYIESTNDIDAIEFHCNGAGAQKAETQLQRCNANGDDDDILHYDRHTNAERKNHPSSTTSRTNIRS.

A compositionally biased stretch (polar residues) spans 1 to 10 (MSNTTRSSRV). Residues 1 to 42 (MSNTTRSSRVTIGRIGTTPQITDPWSSGLEKQRPSRCGGPKS) form a disordered region. Asn3, Asn109, and Asn130 each carry an N-linked (GlcNAc...) asparagine glycan. The interval 139–164 (VSSLHSSRRTNPPSSSSSSSSNVDVD) is disordered. A compositionally biased stretch (low complexity) spans 147-160 (RTNPPSSSSSSSSN). An N-linked (GlcNAc...) asparagine glycan is attached at Asn205. Positions 383–705 (QWYLNGGAKD…YGLMDAGAMV (323 aa)) constitute a Peptidase S8 domain. Asp417 (charge relay system) is an active-site residue. Residues 424-456 (HPDLAQNYDPEASFDINGNDSDPTPQDNGDNKH) form a disordered region. The segment covering 439–451 (INGNDSDPTPQDN) has biased composition (polar residues). Residue Asn442 is glycosylated (N-linked (GlcNAc...) asparagine). Residue His456 is the Charge relay system of the active site. 2 disulfides stabilise this stretch: Cys473–Cys629 and Cys565–Cys595. The N-linked (GlcNAc...) asparagine glycan is linked to Asn480. Residue Ser637 is the Charge relay system of the active site. The P/Homo B domain occupies 714 to 852 (VPPQHICKSR…QLIFYGTSTQ (139 aa)). Cysteines 720 and 748 form a disulfide. Residue Asn927 is glycosylated (N-linked (GlcNAc...) asparagine). FU repeat units follow at residues 961–1006 (KKIL…RSFP), 1009–1056 (VGIC…GYFE), 1060–1104 (NRTC…DTYE), 1107–1152 (DNKC…GFYA), 1156–1204 (RLEC…SEFY), 1208–1253 (EGQC…GFFV), 1256–1299 (GSLC…GYYS), 1301–1346 (RGIC…GFYK), 1348–1393 (DFGC…QYYD), and 1396–1443 (SATC…QTLA). N-linked (GlcNAc...) asparagine glycosylation is present at Asn1060. Asn1181 is a glycosylation site (N-linked (GlcNAc...) asparagine). N-linked (GlcNAc...) asparagine glycans are attached at residues Asn1274 and Asn1277. An N-linked (GlcNAc...) asparagine glycan is attached at Asn1439. The helical transmembrane segment at 1512-1532 (AIAVAICLLIITIFSIIFAVL) threads the bilayer. Residues 1533-1679 (QRNSNHVSRN…STTSRTNIRS (147 aa)) lie on the Cytoplasmic side of the membrane. Positions 1660-1679 (TNAERKNHPSSTTSRTNIRS) are disordered. Polar residues predominate over residues 1668–1679 (PSSTTSRTNIRS).

Belongs to the peptidase S8 family. Furin subfamily. The cofactor is Ca(2+). As to expression, transient expression in a subset of central nervous system neurons during embryonic stages 12-13. Expression in developing tracheal tree from stage 13 to end of embryonic development.

It is found in the membrane. It catalyses the reaction Release of mature proteins from their proproteins by cleavage of -Arg-Xaa-Yaa-Arg-|-Zaa- bonds, where Xaa can be any amino acid and Yaa is Arg or Lys. Releases albumin, complement component C3 and von Willebrand factor from their respective precursors.. Functionally, furin is likely to represent the ubiquitous endoprotease activity within constitutive secretory pathways and capable of cleavage at the RX(K/R)R consensus motif. The sequence is that of Furin-like protease 2 (Fur2) from Drosophila melanogaster (Fruit fly).